We begin with the raw amino-acid sequence, 182 residues long: Large ribosomal subunit protein uL6 (182 aa).

This sequence belongs to the universal ribosomal protein uL6 family. As to quaternary structure, part of the 50S ribosomal subunit.

In terms of biological role, this protein binds to the 23S rRNA, and is important in its secondary structure. It is located near the subunit interface in the base of the L7/L12 stalk, and near the tRNA binding site of the peptidyltransferase center. This is Large ribosomal subunit protein uL6 from Karelsulcia muelleri (strain GWSS) (Sulcia muelleri).